Reading from the N-terminus, the 141-residue chain is Putative nickel-responsive regulator (141 aa).

Histidine 80, histidine 91, histidine 93, and cysteine 99 together coordinate Ni(2+).

The protein belongs to the transcriptional regulatory CopG/NikR family. Requires Ni(2+) as cofactor.

Transcriptional regulator. The sequence is that of Putative nickel-responsive regulator from Methanococcus maripaludis (strain DSM 14266 / JCM 13030 / NBRC 101832 / S2 / LL).